The following is a 671-amino-acid chain: DNA ligase (671 aa).

Residues 31 to 35 (DAEYD), 80 to 81 (SL), and glutamate 110 each bind NAD(+). The active-site N6-AMP-lysine intermediate is the lysine 112. NAD(+) is bound by residues arginine 133, glutamate 167, lysine 283, and lysine 307. Zn(2+) contacts are provided by cysteine 401, cysteine 404, cysteine 419, and cysteine 424. The region spanning 587–671 (EEELVFAGKT…YLPDEGGLNE (85 aa)) is the BRCT domain.

The protein belongs to the NAD-dependent DNA ligase family. LigA subfamily. The cofactor is Mg(2+). Mn(2+) serves as cofactor.

The catalysed reaction is NAD(+) + (deoxyribonucleotide)n-3'-hydroxyl + 5'-phospho-(deoxyribonucleotide)m = (deoxyribonucleotide)n+m + AMP + beta-nicotinamide D-nucleotide.. Its function is as follows. DNA ligase that catalyzes the formation of phosphodiester linkages between 5'-phosphoryl and 3'-hydroxyl groups in double-stranded DNA using NAD as a coenzyme and as the energy source for the reaction. It is essential for DNA replication and repair of damaged DNA. The polypeptide is DNA ligase (Listeria monocytogenes serotype 4a (strain HCC23)).